Consider the following 256-residue polypeptide: uncharacterized protein (256 aa).

4 helical membrane-spanning segments follow: residues 5-25 (FIEG…NYLL), 30-50 (ILST…LKVF), 64-84 (VVIF…DPAI), and 105-125 (VGIT…LGII). A disordered region spans residues 198–256 (EKTKSLDSISHSSSSSRKSSTELKIPPVETRIVAEIPVPSSVKRRRHRPNKSMGSIKNS). The segment covering 203–215 (LDSISHSSSSSRK) has biased composition (low complexity). A phosphoserine mark is found at S210 and S211.

The protein localises to the endoplasmic reticulum membrane. It is found in the nucleus membrane. This is an uncharacterized protein from Schizosaccharomyces pombe (strain 972 / ATCC 24843) (Fission yeast).